The chain runs to 549 residues: ATP synthase subunit alpha (549 aa).

An ATP-binding site is contributed by 172–179 (GDRKTGKT). The segment at 513 to 549 (SSTGESVVPDEHVEAMDEEDLGKESVKVKKPAPQKKK) is disordered. The segment covering 540–549 (VKKPAPQKKK) has biased composition (basic residues).

It belongs to the ATPase alpha/beta chains family. F-type ATPases have 2 components, CF(1) - the catalytic core - and CF(0) - the membrane proton channel. CF(1) has five subunits: alpha(3), beta(3), gamma(1), delta(1), epsilon(1). CF(0) has three main subunits: a(1), b(2) and c(9-12). The alpha and beta chains form an alternating ring which encloses part of the gamma chain. CF(1) is attached to CF(0) by a central stalk formed by the gamma and epsilon chains, while a peripheral stalk is formed by the delta and b chains.

Its subcellular location is the cell membrane. It carries out the reaction ATP + H2O + 4 H(+)(in) = ADP + phosphate + 5 H(+)(out). In terms of biological role, produces ATP from ADP in the presence of a proton gradient across the membrane. The alpha chain is a regulatory subunit. In Mycobacterium marinum (strain ATCC BAA-535 / M), this protein is ATP synthase subunit alpha.